Here is a 95-residue protein sequence, read N- to C-terminus: Integration host factor subunit beta (95 aa).

The interval 56–76 (RAPRTGRNPKTGTSVELDGKY) is disordered.

It belongs to the bacterial histone-like protein family. As to quaternary structure, heterodimer of an alpha and a beta chain.

This protein is one of the two subunits of integration host factor, a specific DNA-binding protein that functions in genetic recombination as well as in transcriptional and translational control. The protein is Integration host factor subunit beta of Shewanella denitrificans (strain OS217 / ATCC BAA-1090 / DSM 15013).